Consider the following 48-residue polypeptide: Ribulose bisphosphate carboxylase large chain (48 aa).

The protein belongs to the RuBisCO large chain family. Type I subfamily. Heterohexadecamer of 8 large chains and 8 small chains.

The protein localises to the plastid. It localises to the chloroplast. The catalysed reaction is 2 (2R)-3-phosphoglycerate + 2 H(+) = D-ribulose 1,5-bisphosphate + CO2 + H2O. It carries out the reaction D-ribulose 1,5-bisphosphate + O2 = 2-phosphoglycolate + (2R)-3-phosphoglycerate + 2 H(+). In terms of biological role, ruBisCO catalyzes two reactions: the carboxylation of D-ribulose 1,5-bisphosphate, the primary event in carbon dioxide fixation, as well as the oxidative fragmentation of the pentose substrate in the photorespiration process. Both reactions occur simultaneously and in competition at the same active site. This is Ribulose bisphosphate carboxylase large chain (rbcL) from Pinus pinaster (Maritime pine).